The sequence spans 276 residues: Undecaprenyl-diphosphatase 2 (276 aa).

The next 8 membrane-spanning stretches (helical) occupy residues 4–24, 44–64, 87–107, 114–134, 150–170, 193–213, 225–245, and 256–276; these read IEAL…VSSL, DFLP…LIYF, ARLM…GLLL, LFAS…LLLW, LSFA…LPGF, FSFL…IPKL, LLLA…WFLM, and LRPF…FKLV.

It belongs to the UppP family.

It is found in the cell inner membrane. It carries out the reaction di-trans,octa-cis-undecaprenyl diphosphate + H2O = di-trans,octa-cis-undecaprenyl phosphate + phosphate + H(+). Functionally, catalyzes the dephosphorylation of undecaprenyl diphosphate (UPP). Confers resistance to bacitracin. The chain is Undecaprenyl-diphosphatase 2 from Chromobacterium violaceum (strain ATCC 12472 / DSM 30191 / JCM 1249 / CCUG 213 / NBRC 12614 / NCIMB 9131 / NCTC 9757 / MK).